We begin with the raw amino-acid sequence, 176 residues long: V-type proton ATPase 16 kDa proteolipid subunit (176 aa).

At 1-17 the chain is on the lumenal side; sequence MSVLLRSVTELCPVYSP. The helical transmembrane segment at 18-38 threads the bilayer; that stretch reads FFGSMGITASIVFTVFGGAYG. At 39 to 62 the chain is on the cytoplasmic side; it reads TAKSSVGISSVGVMKPEFIMRSLF. The chain crosses the membrane as a helical span at residues 63–83; it reads PVVFAGVIGLYGLIVCIVLFI. The Lumenal segment spans residues 84–98; that stretch reads NVNKSEYSLNRAFLD. The helical transmembrane segment at 99–119 threads the bilayer; sequence LGAGLTCGLCGLASGMSIGIS. The Cytoplasmic portion of the chain corresponds to 120 to 136; the sequence is GDCGVRGAAQQPKLFVS. Residues 137 to 157 traverse the membrane as a helical segment; it reads MLICLIFSEALALYGFIVALI. Over 158–176 the chain is Lumenal; that stretch reads MAATGDNSCVATASTSSSS.

The protein belongs to the V-ATPase proteolipid subunit family. V-ATPase is a heteromultimeric enzyme composed of a peripheral catalytic V1 complex (main components: subunits A, B, C, D, E, and F) attached to an integral membrane V0 proton pore complex (main component: the proteolipid protein; which is present as a hexamer that forms the proton-conducting pore).

The protein localises to the vacuole membrane. Proton-conducting pore forming subunit of the membrane integral V0 complex of vacuolar ATPase. V-ATPase is responsible for acidifying a variety of intracellular compartments in eukaryotic cells. The polypeptide is V-type proton ATPase 16 kDa proteolipid subunit (VMA3) (Entamoeba dispar).